Here is a 360-residue protein sequence, read N- to C-terminus: Heme A synthase (360 aa).

The next 5 membrane-spanning stretches (helical) occupy residues 13–33 (AVRW…LVGG), 99–119 (LLGR…LWRG), 129–149 (LWLL…MVAS), 160–180 (YRLA…VWTV), and 199–219 (SALL…VAGL). A heme-binding site is contributed by H263. 3 consecutive transmembrane segments (helical) span residues 265–282 (MTAY…FDAV), 292–312 (GALW…LTLL), and 315–335 (VPIG…TLAV). Position 323 (H323) interacts with heme.

Belongs to the COX15/CtaA family. Type 2 subfamily. Interacts with CtaB. Heme b serves as cofactor.

It localises to the cell membrane. It catalyses the reaction Fe(II)-heme o + 2 A + H2O = Fe(II)-heme a + 2 AH2. It participates in porphyrin-containing compound metabolism; heme A biosynthesis; heme A from heme O: step 1/1. Functionally, catalyzes the conversion of heme O to heme A by two successive hydroxylations of the methyl group at C8. The first hydroxylation forms heme I, the second hydroxylation results in an unstable dihydroxymethyl group, which spontaneously dehydrates, resulting in the formyl group of heme A. The sequence is that of Heme A synthase from Bradyrhizobium diazoefficiens (strain JCM 10833 / BCRC 13528 / IAM 13628 / NBRC 14792 / USDA 110).